We begin with the raw amino-acid sequence, 452 residues long: uncharacterized protein (452 aa).

ATP is bound at residue 72–79 (GPPGSGKT).

This sequence belongs to the AAA ATPase family. RarA/MGS1/WRNIP1 subfamily.

This is an uncharacterized protein from Mycobacterium tuberculosis (strain ATCC 25618 / H37Rv).